A 452-amino-acid chain; its full sequence is tRNA modification GTPase MnmE (452 aa).

(6S)-5-formyl-5,6,7,8-tetrahydrofolate is bound by residues Arg21, Glu78, and Lys118. Residues Gly214–Gly375 form the TrmE-type G domain. Residue Asn224 coordinates K(+). GTP-binding positions include Asn224–Ser229, Thr243–Thr249, and Asp268–Gly271. Ser228 is a Mg(2+) binding site. 3 residues coordinate K(+): Thr243, Ile245, and Thr248. Thr249 is a binding site for Mg(2+). Position 452 (Lys452) interacts with (6S)-5-formyl-5,6,7,8-tetrahydrofolate.

Belongs to the TRAFAC class TrmE-Era-EngA-EngB-Septin-like GTPase superfamily. TrmE GTPase family. As to quaternary structure, homodimer. Heterotetramer of two MnmE and two MnmG subunits. Requires K(+) as cofactor.

It is found in the cytoplasm. In terms of biological role, exhibits a very high intrinsic GTPase hydrolysis rate. Involved in the addition of a carboxymethylaminomethyl (cmnm) group at the wobble position (U34) of certain tRNAs, forming tRNA-cmnm(5)s(2)U34. The protein is tRNA modification GTPase MnmE of Haemophilus influenzae (strain PittGG).